Consider the following 519-residue polypeptide: Protein nucleotidyltransferase YdiU (519 aa).

ATP-binding residues include G100, G102, R103, K123, D135, G136, R193, and R200. The active-site Proton acceptor is D270. N271 and D280 together coordinate Mg(2+). Residue D280 coordinates ATP.

This sequence belongs to the SELO family. Requires Mg(2+) as cofactor. Mn(2+) is required as a cofactor.

It catalyses the reaction L-seryl-[protein] + ATP = 3-O-(5'-adenylyl)-L-seryl-[protein] + diphosphate. The enzyme catalyses L-threonyl-[protein] + ATP = 3-O-(5'-adenylyl)-L-threonyl-[protein] + diphosphate. The catalysed reaction is L-tyrosyl-[protein] + ATP = O-(5'-adenylyl)-L-tyrosyl-[protein] + diphosphate. It carries out the reaction L-histidyl-[protein] + UTP = N(tele)-(5'-uridylyl)-L-histidyl-[protein] + diphosphate. It catalyses the reaction L-seryl-[protein] + UTP = O-(5'-uridylyl)-L-seryl-[protein] + diphosphate. The enzyme catalyses L-tyrosyl-[protein] + UTP = O-(5'-uridylyl)-L-tyrosyl-[protein] + diphosphate. Its function is as follows. Nucleotidyltransferase involved in the post-translational modification of proteins. It can catalyze the addition of adenosine monophosphate (AMP) or uridine monophosphate (UMP) to a protein, resulting in modifications known as AMPylation and UMPylation. This is Protein nucleotidyltransferase YdiU from Xylella fastidiosa (strain Temecula1 / ATCC 700964).